A 139-amino-acid chain; its full sequence is Intrinsically disordered protein, expressed in pharynx 15 (139 aa).

Over residues 1–12 (MNNNQGMYNTQT) the composition is skewed to polar residues. The interval 1 to 98 (MNNNQGMYNT…GSSTPSPQYS (98 aa)) is disordered. Composition is skewed to low complexity over residues 13–41 (TQGYGNNQGSYQNQMMYNNNNPQNTQTTT) and 49–98 (QPQQ…PQYS).

The protein is Intrinsically disordered protein, expressed in pharynx 15 of Caenorhabditis elegans.